The chain runs to 410 residues: Testis-specific Y-encoded-like protein 6 (410 aa).

Disordered stretches follow at residues 1 to 31 and 46 to 69; these read MSLPESPHSPATLDYALEDPHQGQRSREKSK and PIVFPPPRLPEEGVAPQDPADGGH. The residue at position 9 (S9) is a Phosphoserine. Basic and acidic residues predominate over residues 18-31; the sequence is EDPHQGQRSREKSK.

The protein belongs to the nucleosome assembly protein (NAP) family.

In Homo sapiens (Human), this protein is Testis-specific Y-encoded-like protein 6 (TSPYL6).